Consider the following 2698-residue polypeptide: Zinc finger protein 292 (2698 aa).

The C2H2-type 1 zinc-finger motif lies at 567–589 (YSCPICAKNFNSKDSFVPHVTLH). S654 bears the Phosphoserine mark. 6 C2H2-type zinc fingers span residues 681 to 705 (FNCP…VKGH), 722 to 744 (VICQ…LQMH), 750 to 774 (YICI…RKEH), 779 to 803 (AKCL…EAQH), 807 to 831 (YTCK…QDGH), and 1085 to 1110 (FSCQ…KTAH). Positions 822–834 (SEMEKHQDGHSHP) are enriched in basic and acidic residues. The interval 822 to 894 (SEMEKHQDGH…AEPAVTKHGQ (73 aa)) is disordered. K1104 is subject to N6-acetyllysine. A Phosphoserine modification is found at S1146. Polar residues predominate over residues 1278–1325 (NSTNHYPSQTDGNINSSFLKGGSSENGVFPSQVSSADDFSSTSAQPST). The tract at residues 1278 to 1349 (NSTNHYPSQT…KERKPKHNKR (72 aa)) is disordered. The C2H2-type 8; degenerate zinc finger occupies 1361–1383 (FICSRCYRAFTNPRSLGGHLSKR). Composition is skewed to polar residues over residues 1574 to 1603 (FSSS…TRSS) and 1624 to 1633 (SVSNTSQNVL). The tract at residues 1574–1656 (FSSSTEPPQN…PVPDTNTRSD (83 aa)) is disordered. 2 consecutive C2H2-type zinc fingers follow at residues 1879–1904 (FVCQ…GKIH) and 1924–1949 (FKCV…QLVH). A disordered region spans residues 1964–1997 (PYGRKSQSENLSSPQNNQVKKQPSMAEETKTESQ). Residues 1971–1984 (SENLSSPQNNQVKK) show a composition bias toward polar residues. K2020 bears the N6-acetyllysine mark. Over residues 2021-2032 (QLAEKKSPEKPE) the composition is skewed to basic and acidic residues. Residues 2021–2075 (QLAEKKSPEKPESSSQPVTSSAEQYNANLANLKTKGRKNKRHRKEKEEKREKNPV) are disordered. Over residues 2038 to 2051 (VTSSAEQYNANLAN) the composition is skewed to polar residues. Over residues 2054–2064 (TKGRKNKRHRK) the composition is skewed to basic residues. C2H2-type zinc fingers lie at residues 2091-2116 (YCCV…QAVH), 2149-2174 (FRCQ…MKLH), 2193-2218 (FPCD…EVDH), and 2233-2258 (YKCD…FNKH). The segment covering 2262–2271 (HKAHLIRPRK) has biased composition (basic residues). The tract at residues 2262-2323 (HKAHLIRPRK…KSNLENKSAK (62 aa)) is disordered. The segment at 2362–2386 (YPCMIKGCTSVVTSESNIIRHYKCH) adopts a C2H2-type 15 zinc-finger fold. 3 disordered regions span residues 2411–2454 (GKEI…GEKD), 2467–2553 (LINE…EEHP), and 2580–2608 (KQKK…HVDK). Positions 2421-2437 (KNDKKDPDSSVLEKNDN) are enriched in basic and acidic residues. Residues 2470 to 2488 (EDSTNAENQGNTTLKGNNE) show a composition bias toward polar residues. Composition is skewed to basic and acidic residues over residues 2489–2501 (FQEH…ERQK) and 2580–2590 (KQKKNSDRDHS). The segment covering 2596 to 2606 (RGSHSSSRRHV) has biased composition (basic residues).

Belongs to the krueppel C2H2-type zinc-finger protein family. In terms of tissue distribution, expressed in postnatal day 1 (P1) pituitary. Also detected in presomatotrophic cell line GHFT1-5.

The protein localises to the nucleus. In terms of biological role, may be involved in transcriptional regulation. This is Zinc finger protein 292 from Mus musculus (Mouse).